The sequence spans 483 residues: UDP-N-acetylmuramate--L-alanine ligase (483 aa).

112-118 (GTHGKTT) contributes to the ATP binding site.

Belongs to the MurCDEF family.

It localises to the cytoplasm. It carries out the reaction UDP-N-acetyl-alpha-D-muramate + L-alanine + ATP = UDP-N-acetyl-alpha-D-muramoyl-L-alanine + ADP + phosphate + H(+). It functions in the pathway cell wall biogenesis; peptidoglycan biosynthesis. Functionally, cell wall formation. This chain is UDP-N-acetylmuramate--L-alanine ligase, found in Ralstonia pickettii (strain 12J).